The sequence spans 382 residues: Prophage ps2 probable integrase (382 aa).

The Core-binding (CB) domain occupies alanine 63–valine 142. Positions isoleucine 170–aspartate 376 constitute a Tyr recombinase domain. Residues arginine 209, lysine 242, histidine 326, arginine 329, and histidine 352 contribute to the active site. The O-(3'-phospho-DNA)-tyrosine intermediate role is filled by tyrosine 363.

It belongs to the 'phage' integrase family.

This Lactococcus lactis subsp. lactis (strain IL1403) (Streptococcus lactis) protein is Prophage ps2 probable integrase (ps201).